A 254-amino-acid chain; its full sequence is MWNPEAYLSFADHRGRPFFDLLARVGADAPRRVVDLGCGPGNLTVVLRHRWPEAVVEAWDNSPEMVAAARERGVQANLGDVRGWSPQPDTDVVLSNATLQWVPEHPELLTRWAGALAAGSWLAMQVPGNFDAPSHQAVRRLADREPWAPLLHDIPFRVGKVVETPADYAALLTDAGCSVDAWETTYIHELTDAHPVLEWITGTALRPVRSRLTDEQWDRFRAELIPLLDEAYPVRADGRTFFPFRRVFVVARTG.

This sequence belongs to the methyltransferase superfamily. Tam family.

It is found in the cytoplasm. The enzyme catalyses trans-aconitate + S-adenosyl-L-methionine = (E)-3-(methoxycarbonyl)pent-2-enedioate + S-adenosyl-L-homocysteine. Functionally, catalyzes the S-adenosylmethionine monomethyl esterification of trans-aconitate. This is Trans-aconitate 2-methyltransferase from Mycobacterium sp. (strain JLS).